The chain runs to 183 residues: Threonylcarbamoyl-AMP synthase (183 aa).

The region spanning 1–183 (MELAQIVERL…IFSRQIFRRG (183 aa)) is the YrdC-like domain.

The protein belongs to the SUA5 family. TsaC subfamily.

Its subcellular location is the cytoplasm. The catalysed reaction is L-threonine + hydrogencarbonate + ATP = L-threonylcarbamoyladenylate + diphosphate + H2O. Required for the formation of a threonylcarbamoyl group on adenosine at position 37 (t(6)A37) in tRNAs that read codons beginning with adenine. Catalyzes the conversion of L-threonine, HCO(3)(-)/CO(2) and ATP to give threonylcarbamoyl-AMP (TC-AMP) as the acyladenylate intermediate, with the release of diphosphate. The chain is Threonylcarbamoyl-AMP synthase from Mannheimia succiniciproducens (strain KCTC 0769BP / MBEL55E).